Here is a 143-residue protein sequence, read N- to C-terminus: SsrA-binding protein (143 aa).

Belongs to the SmpB family.

The protein resides in the cytoplasm. In terms of biological role, required for rescue of stalled ribosomes mediated by trans-translation. Binds to transfer-messenger RNA (tmRNA), required for stable association of tmRNA with ribosomes. tmRNA and SmpB together mimic tRNA shape, replacing the anticodon stem-loop with SmpB. tmRNA is encoded by the ssrA gene; the 2 termini fold to resemble tRNA(Ala) and it encodes a 'tag peptide', a short internal open reading frame. During trans-translation Ala-aminoacylated tmRNA acts like a tRNA, entering the A-site of stalled ribosomes, displacing the stalled mRNA. The ribosome then switches to translate the ORF on the tmRNA; the nascent peptide is terminated with the 'tag peptide' encoded by the tmRNA and targeted for degradation. The ribosome is freed to recommence translation, which seems to be the essential function of trans-translation. This Deinococcus geothermalis (strain DSM 11300 / CIP 105573 / AG-3a) protein is SsrA-binding protein.